The following is a 181-amino-acid chain: Large ribosomal subunit protein uL6 (181 aa).

Belongs to the universal ribosomal protein uL6 family. As to quaternary structure, part of the 50S ribosomal subunit.

In terms of biological role, this protein binds to the 23S rRNA, and is important in its secondary structure. It is located near the subunit interface in the base of the L7/L12 stalk, and near the tRNA binding site of the peptidyltransferase center. The protein is Large ribosomal subunit protein uL6 of Hydrogenobaculum sp. (strain Y04AAS1).